A 190-amino-acid polypeptide reads, in one-letter code: Elongation factor P-like protein (190 aa).

Belongs to the elongation factor P family.

In Salmonella gallinarum (strain 287/91 / NCTC 13346), this protein is Elongation factor P-like protein.